Consider the following 243-residue polypeptide: Type III pantothenate kinase (243 aa).

6 to 13 (DIGNTNLK) serves as a coordination point for ATP. Residue 101 to 104 (GSDI) participates in substrate binding. Asp-103 (proton acceptor) is an active-site residue. Thr-125 provides a ligand contact to ATP. Residue Thr-176 participates in substrate binding.

Belongs to the type III pantothenate kinase family. In terms of assembly, homodimer. NH4(+) is required as a cofactor. Requires K(+) as cofactor.

It localises to the cytoplasm. The enzyme catalyses (R)-pantothenate + ATP = (R)-4'-phosphopantothenate + ADP + H(+). Its pathway is cofactor biosynthesis; coenzyme A biosynthesis; CoA from (R)-pantothenate: step 1/5. Catalyzes the phosphorylation of pantothenate (Pan), the first step in CoA biosynthesis. The protein is Type III pantothenate kinase of Mycoplasma mobile (strain ATCC 43663 / 163K / NCTC 11711) (Mesomycoplasma mobile).